Here is a 297-residue protein sequence, read N- to C-terminus: Nucleotide-binding protein CJA_2809 (297 aa).

ATP is bound at residue Gly8–Thr15. Asp59 to Asn62 provides a ligand contact to GTP.

This sequence belongs to the RapZ-like family.

In terms of biological role, displays ATPase and GTPase activities. In Cellvibrio japonicus (strain Ueda107) (Pseudomonas fluorescens subsp. cellulosa), this protein is Nucleotide-binding protein CJA_2809.